The sequence spans 74 residues: U3-agatoxin-Ao1g (74 aa).

A signal peptide spans 1–20; the sequence is MRAIISLLLISTMVFGVIEA. The propeptide occupies 21-34; sequence VSVEEGLKIFEGER. Disulfide bonds link Cys37/Cys53, Cys44/Cys58, Cys52/Cys68, and Cys60/Cys66. An Asparagine amide modification is found at Asn72.

Belongs to the neurotoxin 07 (Beta/delta-agtx) family. 03 (aga-4) subfamily. Aga sub-subfamily. In terms of tissue distribution, expressed by the venom gland.

Its subcellular location is the secreted. In terms of biological role, insecticidal neurotoxin that modulates the insect Nav channel (DmNaV1/tipE (para/tipE)) in a unique manner, with both the activation and inactivation processes being affected. The voltage dependence of activation is shifted toward more hyperpolarized potentials (analogous to site 4 toxins) and a non-inactivating persistent sodium current is induced (site 3-like action). Interestingly, both effects take place in a voltage-dependent manner, producing a bell-shaped curve between -80 and 0 mV. The chain is U3-agatoxin-Ao1g from Agelena orientalis (Funnel-web spider).